The primary structure comprises 245 residues: Probable phosphatase NT01EI_1577 (245 aa).

Zn(2+) contacts are provided by His-7, His-9, His-15, His-40, Glu-73, His-101, His-131, Asp-192, and His-194.

This sequence belongs to the PHP family. In terms of assembly, homotrimer. Zn(2+) is required as a cofactor.

The sequence is that of Probable phosphatase NT01EI_1577 from Edwardsiella ictaluri (strain 93-146).